Reading from the N-terminus, the 177-residue chain is Acetyltransferase (177 aa).

In terms of domain architecture, N-acetyltransferase spans 4-174 (AQLRRVTAES…PTAIYFKTLG (171 aa)). Residues Glu-27, 96–98 (LMV), 104–109 (GRGLGR), 130–131 (DT), and Tyr-141 contribute to the acetyl-CoA site.

In terms of biological role, renders tabtoxin-producing pathogens tolerant to their own phytotoxins. The chain is Acetyltransferase (ttr) from Pseudomonas amygdali pv. tabaci (Pseudomonas syringae pv. tabaci).